The sequence spans 203 residues: Sarcosine oxidase subunit gamma (203 aa).

The protein belongs to the SoxG family. In terms of assembly, heterotetramer composed of subunits alpha (SoxA), beta (SoxB), gamma (SoxG) and delta (SoxD).

It is found in the cytoplasm. The enzyme catalyses sarcosine + (6S)-5,6,7,8-tetrahydrofolate + O2 = (6R)-5,10-methylene-5,6,7,8-tetrahydrofolate + glycine + H2O2. The catalysed reaction is sarcosine + O2 + H2O = formaldehyde + glycine + H2O2. Functionally, in the presence of tetrahydrofolate, catalyzes the oxidative demethylation of sarcosine to yield glycine, 5,10-methylenetetrahydrofolate and hydrogen peroxide. In the absence of tetrahydrofolate, catalyzes the oxidative demethylation of sarcosine to yield glycine, formaldehyde and hydrogen peroxide. The polypeptide is Sarcosine oxidase subunit gamma (Corynebacterium sp. (strain P-1)).